Consider the following 548-residue polypeptide: Flagellin (548 aa).

The protein belongs to the bacterial flagellin family.

The protein localises to the secreted. It is found in the bacterial flagellum. Its function is as follows. Flagellin is the subunit protein which polymerizes to form the filaments of bacterial flagella. This chain is Flagellin (fliC), found in Escherichia coli O127:H6 (strain E2348/69 / EPEC).